We begin with the raw amino-acid sequence, 250 residues long: L-ascorbate peroxidase 1, cytosolic (250 aa).

The Proton acceptor role is filled by His42. Residues 113–137 are disordered; the sequence is VPFHPGREDKPAPPPEGRLPDATKG. His163 contacts heme b. K(+)-binding residues include Thr164, Thr180, Asn182, and Asp187.

This sequence belongs to the peroxidase family. Ascorbate peroxidase subfamily. It depends on heme b as a cofactor. In terms of tissue distribution, expressed in roots, aerial vegetative parts and reproductive organs. Expressed in roots, leaves, stems and flowers.

It is found in the cytoplasm. It carries out the reaction L-ascorbate + H2O2 = L-dehydroascorbate + 2 H2O. Inhibited by p-chloromercuriphenylsulfonic acid (CMPSA). In terms of biological role, plays a key role in hydrogen peroxide removal. The sequence is that of L-ascorbate peroxidase 1, cytosolic from Oryza sativa subsp. japonica (Rice).